Consider the following 195-residue polypeptide: UPF0301 protein CCNA_03506 (195 aa).

It belongs to the UPF0301 (AlgH) family.

This Caulobacter vibrioides (strain NA1000 / CB15N) (Caulobacter crescentus) protein is UPF0301 protein CCNA_03506.